A 138-amino-acid chain; its full sequence is UPF0201 protein TK1335 (138 aa).

It belongs to the UPF0201 family.

This chain is UPF0201 protein TK1335, found in Thermococcus kodakarensis (strain ATCC BAA-918 / JCM 12380 / KOD1) (Pyrococcus kodakaraensis (strain KOD1)).